The primary structure comprises 85 residues: Probable dolichol-phosphate mannosyltransferase subunit 3 (85 aa).

2 helical membrane-spanning segments follow: residues 13–33 (VLLV…LSYI) and 37–57 (AHCL…VATF).

This sequence belongs to the DPM3 family.

Its subcellular location is the endoplasmic reticulum membrane. Its pathway is protein modification; protein glycosylation. Stabilizer subunit of the dolichol-phosphate-mannose synthase complex. The protein is Probable dolichol-phosphate mannosyltransferase subunit 3 of Caenorhabditis briggsae.